A 364-amino-acid chain; its full sequence is Aminomethyltransferase (364 aa).

Belongs to the GcvT family. The glycine cleavage system is composed of four proteins: P, T, L and H.

The catalysed reaction is N(6)-[(R)-S(8)-aminomethyldihydrolipoyl]-L-lysyl-[protein] + (6S)-5,6,7,8-tetrahydrofolate = N(6)-[(R)-dihydrolipoyl]-L-lysyl-[protein] + (6R)-5,10-methylene-5,6,7,8-tetrahydrofolate + NH4(+). In terms of biological role, the glycine cleavage system catalyzes the degradation of glycine. The polypeptide is Aminomethyltransferase (Staphylococcus carnosus (strain TM300)).